The sequence spans 429 residues: G2/mitotic-specific cyclin-B1 (429 aa).

The tract at residues 71–114 (TGKVSAKIPPPKPLEKVPPVSEPEVELAETHEPEPVMDEKLSPE) is disordered. At K73 the chain carries N6-acetyllysine. Residues 98-112 (AETHEPEPVMDEKLS) are compositionally biased toward basic and acidic residues. S122 is modified (phosphoserine; by CDK1). S124 carries the post-translational modification Phosphoserine. Residue S129 is modified to Phosphoserine; by PLK1. S143 bears the Phosphoserine mark. 2 interaction with CDK2 regions span residues 165 to 173 (EYVKDIYAY) and 254 to 257 (YEEM). A Phosphothreonine modification is found at T317.

This sequence belongs to the cyclin family. Cyclin AB subfamily. In terms of assembly, interacts with the CDC2 protein kinase to form a serine/threonine kinase holoenzyme complex also known as maturation promoting factor (MPF). The cyclin subunit imparts substrate specificity to the complex. Binds HEI10. Interacts with catalytically active RALBP1 and CDC2 during mitosis to form an endocytotic complex during interphase. Interacts with CCNF; interaction is required for nuclear localization. Interacts with CDK5RAP3. Interacts with RFPL4A and UBE2A. Interacts with INCA1. Ubiquitinated by the SCF(NIPA) complex during interphase, leading to its destruction. Not ubiquitinated during G2/M phases. Post-translationally, phosphorylated by PLK1 at Ser-129 on centrosomes during prophase: phosphorylation by PLK1 does not cause nuclear import. Phosphorylation at Ser-143 was also reported to be mediated by PLK1 but Ser-129 seems to be the primary phosphorylation site.

The protein localises to the cytoplasm. The protein resides in the nucleus. It is found in the cytoskeleton. Its subcellular location is the microtubule organizing center. It localises to the centrosome. In terms of biological role, essential for the control of the cell cycle at the G2/M (mitosis) transition. This is G2/mitotic-specific cyclin-B1 (CCNB1) from Mesocricetus auratus (Golden hamster).